We begin with the raw amino-acid sequence, 179 residues long: Pectinesterase inhibitor 5 (179 aa).

The N-terminal stretch at Met1–Ala25 is a signal peptide. Intrachain disulfides connect Cys35-Cys44 and Cys101-Cys141.

Belongs to the PMEI family. In terms of tissue distribution, expressed in seeds, buds, and mature flowers.

The protein resides in the secreted. The protein localises to the extracellular space. It is found in the apoplast. In terms of biological role, pectin methylesterase (PME) inhibitor that targets PME from seeds and modulates PME activity and pectin methylesterification during seed germination. In Arabidopsis thaliana (Mouse-ear cress), this protein is Pectinesterase inhibitor 5.